The primary structure comprises 357 residues: SPbeta prophage-derived pesticidal crystal protein-like YokG (357 aa).

Belongs to the cry6A endotoxin family.

This chain is SPbeta prophage-derived pesticidal crystal protein-like YokG (yokG), found in Bacillus subtilis (strain 168).